The chain runs to 368 residues: Probable dual-specificity RNA methyltransferase RlmN (368 aa).

The active-site Proton acceptor is the Glu100. One can recognise a Radical SAM core domain in the interval 106–344 (QYYGLSVCVT…CVVRQEHGTD (239 aa)). A disulfide bridge links Cys113 with Cys349. Cys120, Cys124, and Cys127 together coordinate [4Fe-4S] cluster. S-adenosyl-L-methionine-binding positions include 172–173 (GE), Ser204, 227–229 (SLH), and Asn305. The active-site S-methylcysteine intermediate is the Cys349.

The protein belongs to the radical SAM superfamily. RlmN family. [4Fe-4S] cluster serves as cofactor.

The protein localises to the cytoplasm. It carries out the reaction adenosine(2503) in 23S rRNA + 2 reduced [2Fe-2S]-[ferredoxin] + 2 S-adenosyl-L-methionine = 2-methyladenosine(2503) in 23S rRNA + 5'-deoxyadenosine + L-methionine + 2 oxidized [2Fe-2S]-[ferredoxin] + S-adenosyl-L-homocysteine. It catalyses the reaction adenosine(37) in tRNA + 2 reduced [2Fe-2S]-[ferredoxin] + 2 S-adenosyl-L-methionine = 2-methyladenosine(37) in tRNA + 5'-deoxyadenosine + L-methionine + 2 oxidized [2Fe-2S]-[ferredoxin] + S-adenosyl-L-homocysteine. Functionally, specifically methylates position 2 of adenine 2503 in 23S rRNA and position 2 of adenine 37 in tRNAs. This Streptococcus agalactiae serotype III (strain NEM316) protein is Probable dual-specificity RNA methyltransferase RlmN.